The sequence spans 204 residues: MKVKICGITDMETAKRACEYGADALGFVFAESKRKITPGLAKEIIQELPANVLKIGVFVNESVEVIQKITENCGLTHVQLHGGEDNHQIRRLNIPSIKSLGVTSESDMKNAQGYETDYILFDSPKEKFHGGNGKTFPWELLAHMPKELREKTILAGGLNTLNIEEAIRTVRPYMVDVSSGVETEGKKDVEKIKQFIIKAKECSK.

This sequence belongs to the TrpF family.

It carries out the reaction N-(5-phospho-beta-D-ribosyl)anthranilate = 1-(2-carboxyphenylamino)-1-deoxy-D-ribulose 5-phosphate. The protein operates within amino-acid biosynthesis; L-tryptophan biosynthesis; L-tryptophan from chorismate: step 3/5. In Bacillus thuringiensis (strain Al Hakam), this protein is N-(5'-phosphoribosyl)anthranilate isomerase.